The following is a 103-amino-acid chain: GP16 protein (103 aa).

In Orgyia pseudotsugata multicapsid polyhedrosis virus (OpMNPV), this protein is GP16 protein (GP16).